The sequence spans 1087 residues: 2'-5'-oligoadenylate synthase 3 (1087 aa).

An N-acetylmethionine modification is found at Met1. The segment at 6-343 (TPAAALDRFV…GDPVQSWKGP (338 aa)) is OAS domain 1. Interaction with dsRNA regions lie at residues 12-57 (DRFV…VLKT) and 186-200 (ELRR…AKLK). The tract at residues 344 to 410 (GLPRAGCSGL…VPGMALDLSQ (67 aa)) is linker. Thr365 bears the Phosphothreonine mark. OAS domain stretches follow at residues 411–742 (IPTK…PWDV) and 750–1084 (TPAG…WPVK). An ATP-binding site is contributed by Ser804. 3 residues coordinate Mg(2+): Asp816, Asp818, and Asp888. ATP contacts are provided by Arg947, Lys950, and Gln969.

It belongs to the 2-5A synthase family. As to quaternary structure, monomer. Mg(2+) is required as a cofactor. As to expression, present at high level in placenta trophoblast.

It localises to the cytoplasm. The protein localises to the nucleus. It catalyses the reaction 3 ATP = 5'-triphosphoadenylyl-(2'-&gt;5')-adenylyl-(2'-&gt;5')-adenosine + 2 diphosphate. With respect to regulation, produced as a latent enzyme which is activated by dsRNA generated during the course of viral infection. Strongly activated by long dsRNAs at least 50 nucleotides in length. ssRNA does not activate the enzyme. Interferon-induced, dsRNA-activated antiviral enzyme which plays a critical role in cellular innate antiviral response. In addition, it may also play a role in other cellular processes such as apoptosis, cell growth, differentiation and gene regulation. Synthesizes preferentially dimers of 2'-5'-oligoadenylates (2-5A) from ATP which then bind to the inactive monomeric form of ribonuclease L (RNase L) leading to its dimerization and subsequent activation. Activation of RNase L leads to degradation of cellular as well as viral RNA, resulting in the inhibition of protein synthesis, thus terminating viral replication. Can mediate the antiviral effect via the classical RNase L-dependent pathway or an alternative antiviral pathway independent of RNase L. Displays antiviral activity against Chikungunya virus (CHIKV), Dengue virus, Sindbis virus (SINV) and Semliki forest virus (SFV). The polypeptide is 2'-5'-oligoadenylate synthase 3 (OAS3) (Homo sapiens (Human)).